The primary structure comprises 265 residues: Small ribosomal subunit protein uS2 (265 aa).

Residues 231 to 265 (VEEEYEDYEGSEEDYDYDETEYADSVIPEDGEEAE) are disordered.

It belongs to the universal ribosomal protein uS2 family.

This chain is Small ribosomal subunit protein uS2, found in Nostoc sp. (strain PCC 7120 / SAG 25.82 / UTEX 2576).